The sequence spans 188 residues: Elongation factor P (188 aa).

The protein belongs to the elongation factor P family.

It localises to the cytoplasm. It functions in the pathway protein biosynthesis; polypeptide chain elongation. Functionally, involved in peptide bond synthesis. Stimulates efficient translation and peptide-bond synthesis on native or reconstituted 70S ribosomes in vitro. Probably functions indirectly by altering the affinity of the ribosome for aminoacyl-tRNA, thus increasing their reactivity as acceptors for peptidyl transferase. In Paramagnetospirillum magneticum (strain ATCC 700264 / AMB-1) (Magnetospirillum magneticum), this protein is Elongation factor P.